Consider the following 404-residue polypeptide: Tryptophan synthase beta chain (404 aa).

K94 carries the N6-(pyridoxal phosphate)lysine modification.

The protein belongs to the TrpB family. In terms of assembly, tetramer of two alpha and two beta chains. Requires pyridoxal 5'-phosphate as cofactor.

It catalyses the reaction (1S,2R)-1-C-(indol-3-yl)glycerol 3-phosphate + L-serine = D-glyceraldehyde 3-phosphate + L-tryptophan + H2O. The protein operates within amino-acid biosynthesis; L-tryptophan biosynthesis; L-tryptophan from chorismate: step 5/5. Its function is as follows. The beta subunit is responsible for the synthesis of L-tryptophan from indole and L-serine. The polypeptide is Tryptophan synthase beta chain (Staphylococcus aureus (strain bovine RF122 / ET3-1)).